A 290-amino-acid chain; its full sequence is Porphobilinogen deaminase (290 aa).

C237 bears the S-(dipyrrolylmethanemethyl)cysteine mark.

This sequence belongs to the HMBS family. As to quaternary structure, monomer. Requires dipyrromethane as cofactor.

The catalysed reaction is 4 porphobilinogen + H2O = hydroxymethylbilane + 4 NH4(+). It participates in porphyrin-containing compound metabolism; protoporphyrin-IX biosynthesis; coproporphyrinogen-III from 5-aminolevulinate: step 2/4. In terms of biological role, tetrapolymerization of the monopyrrole PBG into the hydroxymethylbilane pre-uroporphyrinogen in several discrete steps. The chain is Porphobilinogen deaminase from Clostridium botulinum (strain Langeland / NCTC 10281 / Type F).